Here is a 140-residue protein sequence, read N- to C-terminus: Nucleoside diphosphate kinase (140 aa).

Residues Lys11, Phe59, Arg87, Thr93, Arg104, and Asn114 each contribute to the ATP site. Residue His117 is the Pros-phosphohistidine intermediate of the active site.

Belongs to the NDK family. As to quaternary structure, homotetramer. Mg(2+) serves as cofactor.

It localises to the cytoplasm. The catalysed reaction is a 2'-deoxyribonucleoside 5'-diphosphate + ATP = a 2'-deoxyribonucleoside 5'-triphosphate + ADP. It carries out the reaction a ribonucleoside 5'-diphosphate + ATP = a ribonucleoside 5'-triphosphate + ADP. In terms of biological role, major role in the synthesis of nucleoside triphosphates other than ATP. The ATP gamma phosphate is transferred to the NDP beta phosphate via a ping-pong mechanism, using a phosphorylated active-site intermediate. This is Nucleoside diphosphate kinase from Granulibacter bethesdensis (strain ATCC BAA-1260 / CGDNIH1).